The following is a 20-amino-acid chain: Tetracycline resistance leader peptide (20 aa).

The disordered stretch occupies residues 1-20 (MKCNKMNRVQLKEGSVSMTL).

This Bacillus subtilis (strain 168) protein is Tetracycline resistance leader peptide (tetL).